The primary structure comprises 37 residues: Large ribosomal subunit protein bL36 (37 aa).

This sequence belongs to the bacterial ribosomal protein bL36 family.

The polypeptide is Large ribosomal subunit protein bL36 (Staphylococcus epidermidis (strain ATCC 35984 / DSM 28319 / BCRC 17069 / CCUG 31568 / BM 3577 / RP62A)).